Here is a 305-residue protein sequence, read N- to C-terminus: Translation initiation factor eIF2B subunit alpha (305 aa).

K35 carries the N6-acetyllysine modification.

Belongs to the eIF-2B alpha/beta/delta subunits family. As to quaternary structure, component of the translation initiation factor 2B (eIF2B) complex which is a heterodecamer of two sets of five different subunits: alpha, beta, gamma, delta and epsilon. Subunits alpha, beta and delta comprise a regulatory subcomplex and subunits epsilon and gamma comprise a catalytic subcomplex. Within the complex, the hexameric regulatory complex resides at the center, with the two heterodimeric catalytic subcomplexes bound on opposite sides.

It is found in the cytoplasm. It localises to the cytosol. With respect to regulation, activated by the chemical integrated stress response (ISR) inhibitor ISRIB which stimulates guanine nucleotide exchange factor activity for both phosphorylated and unphosphorylated eIF2. Functionally, acts as a component of the translation initiation factor 2B (eIF2B) complex, which catalyzes the exchange of GDP for GTP on eukaryotic initiation factor 2 (eIF2) gamma subunit. Its guanine nucleotide exchange factor activity is repressed when bound to eIF2 complex phosphorylated on the alpha subunit, thereby limiting the amount of methionyl-initiator methionine tRNA available to the ribosome and consequently global translation is repressed. The polypeptide is Translation initiation factor eIF2B subunit alpha (Eif2b1) (Rattus norvegicus (Rat)).